A 223-amino-acid polypeptide reads, in one-letter code: Protein-lysine N-methyltransferase CG9154 (223 aa).

The protein belongs to the class I-like SAM-binding methyltransferase superfamily. EFM5 family.

It localises to the cytoplasm. Its function is as follows. S-adenosyl-L-methionine-dependent protein-lysine N-methyltransferase that methylates elongation factor 1-alpha. The chain is Protein-lysine N-methyltransferase CG9154 from Drosophila melanogaster (Fruit fly).